Reading from the N-terminus, the 133-residue chain is MSWQTYVDDHLMCDIEGTGHHLSSAAILGFDGSVWAQSPNFPKFKAEEITNIMKDFDEPGHLAPTGLFLAGTKYMVIQGEPGAVIRGKKGPGGITIKKTAQALIFGVYEEPVTPGQCNMVVEKIGDYLVDQGY.

The protein belongs to the profilin family. In terms of assembly, occurs in many kinds of cells as a complex with monomeric actin in a 1:1 ratio. In terms of tissue distribution, ubiquitous.

It localises to the cytoplasm. The protein localises to the cytoskeleton. Functionally, binds to actin and affects the structure of the cytoskeleton. At high concentrations, profilin prevents the polymerization of actin, whereas it enhances it at low concentrations. By binding to PIP2, it inhibits the formation of IP3 and DG. The sequence is that of Profilin-1 (PRO1) from Solanum lycopersicum (Tomato).